Consider the following 161-residue polypeptide: Prs ADP-ribosylating toxin (161 aa).

The protein belongs to the MbcT/ParT/Res family. As to quaternary structure, homodimer, forms heterotetrameric ParS(2)-ParT(2) complexes. Consumes NAD(+) and auto-ADP-ribosylates on the tryptic fragment Ala-47-Arg-66 in vitro. Also auto-ADP-ribosylates using NADP(+).

In terms of biological role, toxic component of a type II toxin-antitoxin (TA) system. Expression in E.coli inhibits cell growth; bacteriostasis is neutralized by expression of cognate antitoxin ParS. ADP-ribosylates E.coli ribose-phosphate pyrophosphokinase (RPPK, prs) using NAD(+) in vitro; ADP-ribosylates RPPK on 'Lys-182' and 'Ser-202'. Cannot use NADP(+). Also auto-ADP-ribosylates in vitro; in the presence of RPPK auto-ADP-ribosylation decreases. This is Prs ADP-ribosylating toxin from Sphingobium sp. (strain YBL2).